The primary structure comprises 386 residues: Succinate--CoA ligase [ADP-forming] subunit beta (386 aa).

The ATP-grasp domain maps to 9 to 244 (KQVLRSSNLN…DSQIDAKEAA (236 aa)). Residues Lys-46, 53 to 55 (GRG), Glu-99, Leu-102, and Glu-107 each bind ATP. Mg(2+) contacts are provided by Asn-199 and Asp-213. Substrate is bound by residues Asn-264 and 321–323 (GIV).

Belongs to the succinate/malate CoA ligase beta subunit family. Heterotetramer of two alpha and two beta subunits. It depends on Mg(2+) as a cofactor.

The catalysed reaction is succinate + ATP + CoA = succinyl-CoA + ADP + phosphate. It catalyses the reaction GTP + succinate + CoA = succinyl-CoA + GDP + phosphate. It participates in carbohydrate metabolism; tricarboxylic acid cycle; succinate from succinyl-CoA (ligase route): step 1/1. Functionally, succinyl-CoA synthetase functions in the citric acid cycle (TCA), coupling the hydrolysis of succinyl-CoA to the synthesis of either ATP or GTP and thus represents the only step of substrate-level phosphorylation in the TCA. The beta subunit provides nucleotide specificity of the enzyme and binds the substrate succinate, while the binding sites for coenzyme A and phosphate are found in the alpha subunit. The sequence is that of Succinate--CoA ligase [ADP-forming] subunit beta from Thiobacillus denitrificans (strain ATCC 25259 / T1).